The chain runs to 346 residues: Uroporphyrinogen decarboxylase (346 aa).

Substrate contacts are provided by residues R21 to R25, D71, Y146, S201, and H316.

This sequence belongs to the uroporphyrinogen decarboxylase family. As to quaternary structure, homodimer.

The protein resides in the cytoplasm. The catalysed reaction is uroporphyrinogen III + 4 H(+) = coproporphyrinogen III + 4 CO2. Its pathway is porphyrin-containing compound metabolism; protoporphyrin-IX biosynthesis; coproporphyrinogen-III from 5-aminolevulinate: step 4/4. Functionally, catalyzes the decarboxylation of four acetate groups of uroporphyrinogen-III to yield coproporphyrinogen-III. This chain is Uroporphyrinogen decarboxylase, found in Rickettsia massiliae (strain Mtu5).